Consider the following 213-residue polypeptide: 5-methylthioribulose-1-phosphate/5-deoxyribulose-1-phosphate aldolase (213 aa).

E73 acts as the Proton donor/acceptor in catalysis. 4 residues coordinate Co(2+): E73, H92, H94, and H155.

The protein belongs to the aldolase class II family. Co(2+) serves as cofactor.

It catalyses the reaction 5-(methylsulfanyl)-D-ribulose 1-phosphate = 2-(methylsulfanyl)acetaldehyde + dihydroxyacetone phosphate. The enzyme catalyses 5-deoxy-D-ribulose 1-phosphate = dihydroxyacetone phosphate + acetaldehyde. It functions in the pathway amino-acid biosynthesis; L-methionine biosynthesis via salvage pathway. Uses 5-methylthioribulose-1-phosphate to yield 2-(methylthio)acetaldehyde and dihydroxyacetone phosphate. Can also use 5-deoxyribulose 1-phosphate to yield acetaldehyde and dihydroxyacetone phosphate. Part of a bifunctional DHAP-shunt salvage pathway for SAM by-products. This Escherichia coli O45:K1 (strain S88 / ExPEC) protein is 5-methylthioribulose-1-phosphate/5-deoxyribulose-1-phosphate aldolase.